Here is a 298-residue protein sequence, read N- to C-terminus: Probable tRNA(His) guanylyltransferase (298 aa).

Residues D58, G59, and D105 each contribute to the Mg(2+) site. GTP contacts are provided by residues 58–63 (DGRNFH) and 104–105 (SD).

Belongs to the tRNA(His) guanylyltransferase family. As to quaternary structure, homotetramer. Interacts with MFN1 and MFN2; functions as a guanyl-nucleotide exchange factor/GEF for MFN2 and also probably MFN1. The cofactor is Mg(2+). As to expression, expressed in many tissues.

The protein localises to the cytoplasm. It is found in the mitochondrion outer membrane. It catalyses the reaction a 5'-end ribonucleotide-tRNA(His) + GTP + ATP + H2O = a 5'-end phospho-guanosine-ribonucleotide-tRNA(His) + AMP + 2 diphosphate + H(+). Functionally, adds a GMP to the 5'-end of tRNA(His) after transcription and RNase P cleavage. This step is essential for proper recognition of the tRNA and for the fidelity of protein synthesis. Also functions as a guanyl-nucleotide exchange factor/GEF for the MFN1 and MFN2 mitofusins thereby regulating mitochondrial fusion. By regulating both mitochondrial dynamics and bioenergetic function, it contributes to cell survival following oxidative stress. The sequence is that of Probable tRNA(His) guanylyltransferase (THG1L) from Homo sapiens (Human).